A 1430-amino-acid polypeptide reads, in one-letter code: DNA-directed RNA polymerase subunit beta' (1430 aa).

Zn(2+) contacts are provided by Cys70, Cys72, Cys85, and Cys88. Asp495, Asp497, and Asp499 together coordinate Mg(2+). Cys838, Cys912, Cys919, and Cys922 together coordinate Zn(2+).

Belongs to the RNA polymerase beta' chain family. In terms of assembly, the RNAP catalytic core consists of 2 alpha, 1 beta, 1 beta' and 1 omega subunit. When a sigma factor is associated with the core the holoenzyme is formed, which can initiate transcription. Mg(2+) serves as cofactor. Requires Zn(2+) as cofactor.

The enzyme catalyses RNA(n) + a ribonucleoside 5'-triphosphate = RNA(n+1) + diphosphate. Its function is as follows. DNA-dependent RNA polymerase catalyzes the transcription of DNA into RNA using the four ribonucleoside triphosphates as substrates. This chain is DNA-directed RNA polymerase subunit beta', found in Rhodospirillum centenum (strain ATCC 51521 / SW).